A 290-amino-acid chain; its full sequence is Pirin (290 aa).

Fe cation contacts are provided by histidine 56, histidine 58, histidine 101, and glutamate 103.

The protein belongs to the pirin family. In terms of assembly, may interact with NF1/CTF1. Interacts with BCL3. Identified in a complex comprised of PIR, BLC3, NFKB1 and target DNA. Fe cation serves as cofactor. In terms of tissue distribution, weakly expressed in bone marrow.

It localises to the nucleus. The protein localises to the cytoplasm. The catalysed reaction is quercetin + O2 = 2-(3,4-dihydroxybenzoyloxy)-4,6-dihydroxybenzoate + CO. It functions in the pathway flavonoid metabolism; quercetin degradation. Its function is as follows. Transcriptional coregulator of NF-kappa-B which facilitates binding of NF-kappa-B proteins to target kappa-B genes in a redox-state-dependent manner. May be required for efficient terminal myeloid maturation of hematopoietic cells. Has quercetin 2,3-dioxygenase activity (in vitro). This Mus musculus (Mouse) protein is Pirin (Pir).